We begin with the raw amino-acid sequence, 867 residues long: Protein translocase subunit SecA (867 aa).

ATP-binding positions include Gln-85, 103-107 (GEGKT), and Asp-491.

It belongs to the SecA family. Monomer and homodimer. Part of the essential Sec protein translocation apparatus which comprises SecA, SecYEG and auxiliary proteins SecDF. Other proteins may also be involved.

The protein resides in the cell membrane. It localises to the cytoplasm. The enzyme catalyses ATP + H2O + cellular proteinSide 1 = ADP + phosphate + cellular proteinSide 2.. Its function is as follows. Part of the Sec protein translocase complex. Interacts with the SecYEG preprotein conducting channel. Has a central role in coupling the hydrolysis of ATP to the transfer of proteins into and across the cell membrane, serving as an ATP-driven molecular motor driving the stepwise translocation of polypeptide chains across the membrane. The chain is Protein translocase subunit SecA from Mycoplasmopsis pulmonis (strain UAB CTIP) (Mycoplasma pulmonis).